The sequence spans 317 residues: MYTKILGTGSFLPKQVRTNADLEKMVDTSDEWIVTRTGIRERRIAAPDETVSTMGYEAGLRALEMAGVDKEEIGLIVVATTSSTHAFPSAACQIQGMMGIKGCPAFDVAAACAGFTYALSIADQYVKSGAVKYALVIGADVLARTCNPEDRGTIIIFGDGAGAVLLGQSEEQGIISTHLHADGSYGELLTLPNADRVNPDNSIFLTMAGNEVFKVAVTELAHIVDETLAANNLERSALDWLVPHQANLRIISATAKKLGMSMDNVVVTLDRHGNTSAASVPCAFDEAVRDGRIKRGQLVLLEAFGGGFTWGSALVRF.

Catalysis depends on residues cysteine 112 and histidine 244. Residues 245–249 (QANLR) form an ACP-binding region. Asparagine 274 is a catalytic residue.

The protein belongs to the thiolase-like superfamily. FabH family. As to quaternary structure, homodimer.

The protein localises to the cytoplasm. The catalysed reaction is malonyl-[ACP] + acetyl-CoA + H(+) = 3-oxobutanoyl-[ACP] + CO2 + CoA. The protein operates within lipid metabolism; fatty acid biosynthesis. Its function is as follows. Catalyzes the condensation reaction of fatty acid synthesis by the addition to an acyl acceptor of two carbons from malonyl-ACP. Catalyzes the first condensation reaction which initiates fatty acid synthesis and may therefore play a role in governing the total rate of fatty acid production. Possesses both acetoacetyl-ACP synthase and acetyl transacylase activities. Its substrate specificity determines the biosynthesis of branched-chain and/or straight-chain of fatty acids. This Enterobacter sp. (strain 638) protein is Beta-ketoacyl-[acyl-carrier-protein] synthase III.